We begin with the raw amino-acid sequence, 145 residues long: uncharacterized protein (145 aa).

To B.subtilis XkdJ.

This is an uncharacterized protein from Bacillus subtilis (strain 168).